Consider the following 249-residue polypeptide: 5'-nucleotidase SurE (249 aa).

4 residues coordinate a divalent metal cation: D9, D10, S40, and N92.

Belongs to the SurE nucleotidase family. It depends on a divalent metal cation as a cofactor.

It localises to the cytoplasm. The catalysed reaction is a ribonucleoside 5'-phosphate + H2O = a ribonucleoside + phosphate. Nucleotidase that shows phosphatase activity on nucleoside 5'-monophosphates. This is 5'-nucleotidase SurE from Shewanella sediminis (strain HAW-EB3).